A 291-amino-acid chain; its full sequence is 29 kDa ribonucleoprotein B, chloroplastic (291 aa).

In terms of domain architecture, RRM 1 spans 87–165 (LKLFVGNLPF…RAIRVNAGPA (79 aa)). The disordered stretch occupies residues 164–202 (PAPAKRENSSFGGGRGGNSSYGGGRDGNSSFGGARGGRS). Residues 166–206 (PAKRENSSFGGGRGGNSSYGGGRDGNSSFGGARGGRSVDSS) form a linker (Gly-rich) region. The span at 174–189 (FGGGRGGNSSYGGGRD) shows a compositional bias: gly residues. One can recognise an RRM 2 domain in the interval 207–285 (NRVYVGNLSW…RSIRVSAAEE (79 aa)).

The protein resides in the plastid. It is found in the chloroplast. Could be involved in splicing and/or processing of chloroplast RNA's. This Nicotiana sylvestris (Wood tobacco) protein is 29 kDa ribonucleoprotein B, chloroplastic.